A 62-amino-acid polypeptide reads, in one-letter code: MSETIVNCPTCNQDVIWKPESKYRPFCSERCQLIDLGEWANEEKRIAAVENDVMTSDLEGHY.

Positions 8, 11, 27, and 31 each coordinate Zn(2+).

This sequence belongs to the DNA gyrase inhibitor YacG family. In terms of assembly, interacts with GyrB. Zn(2+) serves as cofactor.

Its function is as follows. Inhibits all the catalytic activities of DNA gyrase by preventing its interaction with DNA. Acts by binding directly to the C-terminal domain of GyrB, which probably disrupts DNA binding by the gyrase. This is DNA gyrase inhibitor YacG from Actinobacillus pleuropneumoniae serotype 5b (strain L20).